Reading from the N-terminus, the 172-residue chain is 3-hydroxydecanoyl-[acyl-carrier-protein] dehydratase (172 aa).

Histidine 70 is a catalytic residue.

This sequence belongs to the thioester dehydratase family. FabA subfamily. Homodimer.

The protein localises to the cytoplasm. The catalysed reaction is a (3R)-hydroxyacyl-[ACP] = a (2E)-enoyl-[ACP] + H2O. It carries out the reaction (3R)-hydroxydecanoyl-[ACP] = (2E)-decenoyl-[ACP] + H2O. It catalyses the reaction (2E)-decenoyl-[ACP] = (3Z)-decenoyl-[ACP]. Its pathway is lipid metabolism; fatty acid biosynthesis. Functionally, necessary for the introduction of cis unsaturation into fatty acids. Catalyzes the dehydration of (3R)-3-hydroxydecanoyl-ACP to E-(2)-decenoyl-ACP and then its isomerization to Z-(3)-decenoyl-ACP. Can catalyze the dehydratase reaction for beta-hydroxyacyl-ACPs with saturated chain lengths up to 16:0, being most active on intermediate chain length. This is 3-hydroxydecanoyl-[acyl-carrier-protein] dehydratase from Xylella fastidiosa (strain M23).